The primary structure comprises 308 residues: HPr kinase/phosphorylase (308 aa).

Catalysis depends on residues H136 and K157. 151–158 (GESGIGKS) serves as a coordination point for ATP. Residue S158 coordinates Mg(2+). D175 functions as the Proton acceptor; for phosphorylation activity. Proton donor; for dephosphorylation activity in the catalytic mechanism. The important for the catalytic mechanism of both phosphorylation and dephosphorylation stretch occupies residues 198–207 (IEVRGMGIID). Residue E199 coordinates Mg(2+). R240 is a catalytic residue. Positions 261–266 (PIRPGR) are important for the catalytic mechanism of dephosphorylation.

This sequence belongs to the HPrK/P family. In terms of assembly, homohexamer. The cofactor is Mg(2+).

The catalysed reaction is [HPr protein]-L-serine + ATP = [HPr protein]-O-phospho-L-serine + ADP + H(+). It catalyses the reaction [HPr protein]-O-phospho-L-serine + phosphate + H(+) = [HPr protein]-L-serine + diphosphate. In terms of biological role, catalyzes the ATP- as well as the pyrophosphate-dependent phosphorylation of a specific serine residue in HPr, a phosphocarrier protein of the phosphoenolpyruvate-dependent sugar phosphotransferase system (PTS). HprK/P also catalyzes the pyrophosphate-producing, inorganic phosphate-dependent dephosphorylation (phosphorolysis) of seryl-phosphorylated HPr (P-Ser-HPr). The two antagonistic activities of HprK/P are regulated by several intracellular metabolites, which change their concentration in response to the absence or presence of rapidly metabolisable carbon sources (glucose, fructose, etc.) in the growth medium. Therefore, by controlling the phosphorylation state of HPr, HPrK/P is a sensor enzyme that plays a major role in the regulation of carbon metabolism and sugar transport: it mediates carbon catabolite repression (CCR), and regulates PTS-catalyzed carbohydrate uptake and inducer exclusion. This is HPr kinase/phosphorylase from Clostridium kluyveri (strain NBRC 12016).